A 265-amino-acid polypeptide reads, in one-letter code: Undecaprenyl-diphosphatase (265 aa).

The next 8 helical transmembrane spans lie at 1–21, 39–59, 86–106, 112–132, 140–160, 186–206, 219–239, and 244–264; these read MDIL…FLPI, QGLA…ILYF, WCII…GNFI, SVSV…FADA, LAQM…LAMI, FSFL…GLKL, VGVL…LSFI, and MLPF…LVWF.

This sequence belongs to the UppP family.

The protein resides in the cell inner membrane. It carries out the reaction di-trans,octa-cis-undecaprenyl diphosphate + H2O = di-trans,octa-cis-undecaprenyl phosphate + phosphate + H(+). Functionally, catalyzes the dephosphorylation of undecaprenyl diphosphate (UPP). Confers resistance to bacitracin. This Saccharophagus degradans (strain 2-40 / ATCC 43961 / DSM 17024) protein is Undecaprenyl-diphosphatase.